The following is a 441-amino-acid chain: Serine/threonine-protein phosphatase 2A activator 1 (441 aa).

Polar residues-rich tracts occupy residues 66 to 75 and 421 to 432; these read NIPPSNTTHS and QRQDDLNSTTYR. Disordered regions lie at residues 66-100 and 421-441; these read NIPPSNTTHSRPLDLPPPQGEEEGDKCNISHSSNQ and QRQDDLNSTTYRGRQPRLGRN.

This sequence belongs to the PTPA-type PPIase family.

It localises to the cytoplasm. The protein resides in the nucleus. The enzyme catalyses [protein]-peptidylproline (omega=180) = [protein]-peptidylproline (omega=0). Functionally, PPIases accelerate the folding of proteins. It catalyzes the cis-trans isomerization of proline imidic peptide bonds in oligopeptides. Acts as a regulatory subunit for PP2A-like phosphatases modulating their activity or substrate specificity, probably by inducing a conformational change in the catalytic subunit, a direct target of the PPIase. Can reactivate inactive phosphatase PP2A-phosphatase methylesterase complexes (PP2Ai) in presence of ATP and Mg(2+) by dissociating the inactive form from the complex. The polypeptide is Serine/threonine-protein phosphatase 2A activator 1 (RRD1) (Debaryomyces hansenii (strain ATCC 36239 / CBS 767 / BCRC 21394 / JCM 1990 / NBRC 0083 / IGC 2968) (Yeast)).